Here is a 240-residue protein sequence, read N- to C-terminus: Phosphoribosylaminoimidazole-succinocarboxamide synthase (240 aa).

It belongs to the SAICAR synthetase family.

The catalysed reaction is 5-amino-1-(5-phospho-D-ribosyl)imidazole-4-carboxylate + L-aspartate + ATP = (2S)-2-[5-amino-1-(5-phospho-beta-D-ribosyl)imidazole-4-carboxamido]succinate + ADP + phosphate + 2 H(+). It participates in purine metabolism; IMP biosynthesis via de novo pathway; 5-amino-1-(5-phospho-D-ribosyl)imidazole-4-carboxamide from 5-amino-1-(5-phospho-D-ribosyl)imidazole-4-carboxylate: step 1/2. This chain is Phosphoribosylaminoimidazole-succinocarboxamide synthase, found in Neorickettsia sennetsu (strain ATCC VR-367 / Miyayama) (Ehrlichia sennetsu).